Here is a 92-residue protein sequence, read N- to C-terminus: MGRSLKKGPFVDDHLMKKVEVQEASEKKQVIKTWSRRSTIFPNFIGLTIAVYDGRKHVPVYVTEDMVGHKLGEFAPTRTYKGHGADDKKTRR.

Belongs to the universal ribosomal protein uS19 family.

Its function is as follows. Protein S19 forms a complex with S13 that binds strongly to the 16S ribosomal RNA. The chain is Small ribosomal subunit protein uS19 from Lysinibacillus sphaericus (strain C3-41).